Here is a 185-residue protein sequence, read N- to C-terminus: Large ribosomal subunit protein uL15 (185 aa).

Positions 1 to 51 are disordered; that stretch reads MDLSSLRPAAGAVKNKKRVGRGQGSGNGTTAGKGNKGQQARSGYQKPINEG. The segment covering 21–35 has biased composition (gly residues); it reads RGQGSGNGTTAGKGN.

It belongs to the universal ribosomal protein uL15 family. As to quaternary structure, part of the 50S ribosomal subunit.

Functionally, binds to the 23S rRNA. The polypeptide is Large ribosomal subunit protein uL15 (Chlorobium phaeobacteroides (strain DSM 266 / SMG 266 / 2430)).